The sequence spans 717 residues: Copine family protein 5 (717 aa).

In terms of domain architecture, C2 spans 193-318 (YLGGIIVSAE…KYGPGSDNVY (126 aa)). Residues 377-567 (ELDQRRFDGE…LNKSRIAETA (191 aa)) form the VWFA domain.

It belongs to the copine family.

The sequence is that of Copine family protein 5 (cpna-5) from Caenorhabditis elegans.